A 173-amino-acid polypeptide reads, in one-letter code: Crossover junction endodeoxyribonuclease RuvC (173 aa).

Residues Asp-8, Glu-68, and Asp-140 contribute to the active site. The Mg(2+) site is built by Asp-8, Glu-68, and Asp-140.

The protein belongs to the RuvC family. Homodimer which binds Holliday junction (HJ) DNA. The HJ becomes 2-fold symmetrical on binding to RuvC with unstacked arms; it has a different conformation from HJ DNA in complex with RuvA. In the full resolvosome a probable DNA-RuvA(4)-RuvB(12)-RuvC(2) complex forms which resolves the HJ. Requires Mg(2+) as cofactor.

Its subcellular location is the cytoplasm. It carries out the reaction Endonucleolytic cleavage at a junction such as a reciprocal single-stranded crossover between two homologous DNA duplexes (Holliday junction).. Functionally, the RuvA-RuvB-RuvC complex processes Holliday junction (HJ) DNA during genetic recombination and DNA repair. Endonuclease that resolves HJ intermediates. Cleaves cruciform DNA by making single-stranded nicks across the HJ at symmetrical positions within the homologous arms, yielding a 5'-phosphate and a 3'-hydroxyl group; requires a central core of homology in the junction. The consensus cleavage sequence is 5'-(A/T)TT(C/G)-3'. Cleavage occurs on the 3'-side of the TT dinucleotide at the point of strand exchange. HJ branch migration catalyzed by RuvA-RuvB allows RuvC to scan DNA until it finds its consensus sequence, where it cleaves and resolves the cruciform DNA. This chain is Crossover junction endodeoxyribonuclease RuvC, found in Saccharophagus degradans (strain 2-40 / ATCC 43961 / DSM 17024).